Reading from the N-terminus, the 184-residue chain is Casparian strip membrane protein 1 (184 aa).

Over 1–24 the chain is Cytoplasmic; the sequence is MKESGEHGETSKAPLNRGVSKGLS. Residues 25–45 traverse the membrane as a helical segment; it reads VLDLILRFIAIIGTLASAIAM. Topologically, residues 46–72 are extracellular; sequence GTTNETLPFFTQFIRFKAQYSDLPTLT. N-linked (GlcNAc...) asparagine glycosylation is present at asparagine 49. The helical transmembrane segment at 73-93 threads the bilayer; sequence FFVVANSIVCAYLILSLPLSI. At 94-105 the chain is on the cytoplasmic side; it reads VHIIRSRAKFSR. A helical transmembrane segment spans residues 106-126; sequence LLLIFLDAVMLALVTAGASAA. Residues 127-159 lie on the Extracellular side of the membrane; it reads AAIVYLAHKGNVRANWLAICQQFDSFCERISGS. A helical transmembrane segment spans residues 160-180; it reads LIGSFGAMVVLILLILLSAIA. Residues 181–184 lie on the Cytoplasmic side of the membrane; the sequence is LARR.

It belongs to the Casparian strip membrane proteins (CASP) family. As to quaternary structure, homodimer and heterodimers.

The protein localises to the cell membrane. Functionally, regulates membrane-cell wall junctions and localized cell wall deposition. Required for establishment of the Casparian strip membrane domain (CSD) and the subsequent formation of Casparian strips, a cell wall modification of the root endodermis that determines an apoplastic barrier between the intraorganismal apoplasm and the extraorganismal apoplasm and prevents lateral diffusion. This chain is Casparian strip membrane protein 1, found in Panicum virgatum (Blackwell switchgrass).